The following is a 162-amino-acid chain: Phosphopantetheine adenylyltransferase (162 aa).

Residue Thr10 participates in substrate binding. Residues 10–11 (TF) and His18 contribute to the ATP site. Substrate is bound by residues Lys42, Leu74, and Arg88. ATP-binding positions include 89–91 (GLR), Glu99, and 124–130 (YAFLSSS).

This sequence belongs to the bacterial CoaD family. As to quaternary structure, homohexamer. Mg(2+) is required as a cofactor.

The protein localises to the cytoplasm. It carries out the reaction (R)-4'-phosphopantetheine + ATP + H(+) = 3'-dephospho-CoA + diphosphate. It functions in the pathway cofactor biosynthesis; coenzyme A biosynthesis; CoA from (R)-pantothenate: step 4/5. Reversibly transfers an adenylyl group from ATP to 4'-phosphopantetheine, yielding dephospho-CoA (dPCoA) and pyrophosphate. The protein is Phosphopantetheine adenylyltransferase of Methylococcus capsulatus (strain ATCC 33009 / NCIMB 11132 / Bath).